Reading from the N-terminus, the 590-residue chain is UvrABC system protein C (590 aa).

One can recognise a GIY-YIG domain in the interval Asp-14–Val-91. Residues Gln-196 to Thr-231 form the UVR domain.

This sequence belongs to the UvrC family. As to quaternary structure, interacts with UvrB in an incision complex.

It localises to the cytoplasm. The UvrABC repair system catalyzes the recognition and processing of DNA lesions. UvrC both incises the 5' and 3' sides of the lesion. The N-terminal half is responsible for the 3' incision and the C-terminal half is responsible for the 5' incision. This Bacillus pumilus (strain SAFR-032) protein is UvrABC system protein C.